The primary structure comprises 615 residues: Ectoine/glycine betaine/proline transporter EctP (615 aa).

12 helical membrane-spanning segments follow: residues 24–44 (FIFS…IALG), 62–82 (LGWM…GIFA), 102–122 (IVWF…FWGV), 156–176 (FGIH…YFIY), 207–227 (LAIV…VLQI), 240–260 (VSWV…ISVA), 275–295 (IAMA…LTLL), 329–349 (WTVF…MFVA), 360–380 (FIGG…SIFG), 417–437 (LTGI…ITSI), 463–483 (WACT…SSGI), and 489–509 (VVII…FSLL). Disordered stretches follow at residues 524 to 562 (TRQW…LEHD) and 589 to 615 (PEEA…EYDI). Composition is skewed to basic and acidic residues over residues 526-540 (QWEK…EEHS) and 600-615 (KIVE…EYDI).

This sequence belongs to the BCCT transporter (TC 2.A.15) family.

The protein resides in the cell membrane. In terms of biological role, involved in the uptake of osmoprotectants. Can transport ectoine, proline and glycine betaine. Na(+) is probably the coupling ion. This Corynebacterium glutamicum (strain ATCC 13032 / DSM 20300 / JCM 1318 / BCRC 11384 / CCUG 27702 / LMG 3730 / NBRC 12168 / NCIMB 10025 / NRRL B-2784 / 534) protein is Ectoine/glycine betaine/proline transporter EctP.